A 355-amino-acid chain; its full sequence is UDP-N-acetylglucosamine--N-acetylmuramyl-(pentapeptide) pyrophosphoryl-undecaprenol N-acetylglucosamine transferase (355 aa).

UDP-N-acetyl-alpha-D-glucosamine is bound by residues 15-17 (TGG), N127, R163, S191, I244, 263-268 (ALTVSE), and Q288.

It belongs to the glycosyltransferase 28 family. MurG subfamily.

The protein resides in the cell inner membrane. The catalysed reaction is di-trans,octa-cis-undecaprenyl diphospho-N-acetyl-alpha-D-muramoyl-L-alanyl-D-glutamyl-meso-2,6-diaminopimeloyl-D-alanyl-D-alanine + UDP-N-acetyl-alpha-D-glucosamine = di-trans,octa-cis-undecaprenyl diphospho-[N-acetyl-alpha-D-glucosaminyl-(1-&gt;4)]-N-acetyl-alpha-D-muramoyl-L-alanyl-D-glutamyl-meso-2,6-diaminopimeloyl-D-alanyl-D-alanine + UDP + H(+). The protein operates within cell wall biogenesis; peptidoglycan biosynthesis. In terms of biological role, cell wall formation. Catalyzes the transfer of a GlcNAc subunit on undecaprenyl-pyrophosphoryl-MurNAc-pentapeptide (lipid intermediate I) to form undecaprenyl-pyrophosphoryl-MurNAc-(pentapeptide)GlcNAc (lipid intermediate II). The sequence is that of UDP-N-acetylglucosamine--N-acetylmuramyl-(pentapeptide) pyrophosphoryl-undecaprenol N-acetylglucosamine transferase from Escherichia coli O139:H28 (strain E24377A / ETEC).